A 424-amino-acid chain; its full sequence is Serine--tRNA ligase (424 aa).

230–232 (TAE) provides a ligand contact to L-serine. 261–263 (RSE) serves as a coordination point for ATP. E284 lines the L-serine pocket. 348 to 351 (EISS) lines the ATP pocket. S384 lines the L-serine pocket.

Belongs to the class-II aminoacyl-tRNA synthetase family. Type-1 seryl-tRNA synthetase subfamily. Homodimer. The tRNA molecule binds across the dimer.

The protein resides in the cytoplasm. It catalyses the reaction tRNA(Ser) + L-serine + ATP = L-seryl-tRNA(Ser) + AMP + diphosphate + H(+). The catalysed reaction is tRNA(Sec) + L-serine + ATP = L-seryl-tRNA(Sec) + AMP + diphosphate + H(+). Its pathway is aminoacyl-tRNA biosynthesis; selenocysteinyl-tRNA(Sec) biosynthesis; L-seryl-tRNA(Sec) from L-serine and tRNA(Sec): step 1/1. In terms of biological role, catalyzes the attachment of serine to tRNA(Ser). Is also able to aminoacylate tRNA(Sec) with serine, to form the misacylated tRNA L-seryl-tRNA(Sec), which will be further converted into selenocysteinyl-tRNA(Sec). This is Serine--tRNA ligase from Nitratidesulfovibrio vulgaris (strain ATCC 29579 / DSM 644 / CCUG 34227 / NCIMB 8303 / VKM B-1760 / Hildenborough) (Desulfovibrio vulgaris).